Here is a 260-residue protein sequence, read N- to C-terminus: Hydroxyethylthiazole kinase (260 aa).

R126 and S172 together coordinate ATP. G199 contributes to the substrate binding site.

The protein belongs to the Thz kinase family. The cofactor is Mg(2+).

It carries out the reaction 5-(2-hydroxyethyl)-4-methylthiazole + ATP = 4-methyl-5-(2-phosphooxyethyl)-thiazole + ADP + H(+). The protein operates within cofactor biosynthesis; thiamine diphosphate biosynthesis; 4-methyl-5-(2-phosphoethyl)-thiazole from 5-(2-hydroxyethyl)-4-methylthiazole: step 1/1. Catalyzes the phosphorylation of the hydroxyl group of 4-methyl-5-beta-hydroxyethylthiazole (THZ). This is Hydroxyethylthiazole kinase from Burkholderia thailandensis (strain ATCC 700388 / DSM 13276 / CCUG 48851 / CIP 106301 / E264).